A 100-amino-acid chain; its full sequence is Co-chaperonin GroES (100 aa).

This sequence belongs to the GroES chaperonin family. In terms of assembly, heptamer of 7 subunits arranged in a ring. Interacts with the chaperonin GroEL.

It localises to the cytoplasm. Its function is as follows. Together with the chaperonin GroEL, plays an essential role in assisting protein folding. The GroEL-GroES system forms a nano-cage that allows encapsulation of the non-native substrate proteins and provides a physical environment optimized to promote and accelerate protein folding. GroES binds to the apical surface of the GroEL ring, thereby capping the opening of the GroEL channel. This Mycobacterium marinum (strain ATCC BAA-535 / M) protein is Co-chaperonin GroES.